A 546-amino-acid polypeptide reads, in one-letter code: Hexose transporter HXT10 (546 aa).

The Cytoplasmic portion of the chain corresponds to 1 to 44 (MVSSSVSILGTSAKASTSLSRKDEIKLTPETREASLDIPYKPII). A helical transmembrane segment spans residues 45–65 (AYWTVMGLCLMIAFGGFIFGW). The Extracellular segment spans residues 66–100 (DTGTISGFINQTDFKRRFGELQRDGSFQLSDVRTG). N-linked (GlcNAc...) asparagine glycosylation is present at N75. A helical membrane pass occupies residues 101–121 (LIVGIFNIGCALGGLTLGRLG). Residues 122–127 (DIYGRK) are Cytoplasmic-facing. A helical transmembrane segment spans residues 128 to 148 (IGLMCVILVYVVGIVIQIASS). The Extracellular segment spans residues 149–158 (DKWYQYFIGR). The chain crosses the membrane as a helical span at residues 159 to 179 (IVSGMGVGGVAVLSPTLISEI). The Cytoplasmic portion of the chain corresponds to 180-185 (SPKHLR). A helical transmembrane segment spans residues 186 to 206 (GTCVSFYQLMITLGIFLGYCT). Over 207–220 (NYGTKKYSNSIQWR) the chain is Extracellular. Residues 221-241 (VPLGLCFAWAIFMVIGMVMVP) traverse the membrane as a helical segment. The Cytoplasmic portion of the chain corresponds to 242 to 324 (ESPRYLVEKG…IQSLQQLTGC (83 aa)). The chain crosses the membrane as a helical span at residues 325–341 (NYFFYYGTTIFNAVGMQ). The Extracellular portion of the chain corresponds to 342-347 (DSFETS). Residues 348–365 (IVLGAVNFASTFVALYIV) form a helical membrane-spanning segment. Residues 366–372 (DKFGRRK) lie on the Cytoplasmic side of the membrane. A helical membrane pass occupies residues 373–393 (CLLWGSASMAICFVIFATVGV). Topologically, residues 394 to 415 (TRLWPQGKDQPSSQSAGNVMIV) are extracellular. A helical transmembrane segment spans residues 416-436 (FTCFFIFSFAITWAPIAYVIV). Topologically, residues 437 to 453 (AETYPLRVKNRAMAIAV) are cytoplasmic. Residues 454–474 (GANWMWGFLIGFFTPFITRSI) form a helical membrane-spanning segment. A topological domain (extracellular) is located at residue G475. Residues 476 to 496 (FSYGYVFMGCLIFSYFYVFFF) form a helical membrane-spanning segment. Residues 497 to 546 (VCETKGLTLEEVNEMYEERIKPWKSGGWIPSSRRTPQPTSSTPLVIVDSK) are Cytoplasmic-facing.

Belongs to the major facilitator superfamily. Sugar transporter (TC 2.A.1.1) family.

The protein localises to the membrane. Probable glucose transporter. The polypeptide is Hexose transporter HXT10 (HXT10) (Saccharomyces cerevisiae (strain ATCC 204508 / S288c) (Baker's yeast)).